The following is a 364-amino-acid chain: Probable dual-specificity RNA methyltransferase RlmN (364 aa).

The Proton acceptor role is filled by Glu-107. The 234-residue stretch at 113 to 346 (HDYGNSVCVT…ATIRREQGSD (234 aa)) folds into the Radical SAM core domain. Cys-120 and Cys-351 are oxidised to a cystine. Cys-127, Cys-131, and Cys-134 together coordinate [4Fe-4S] cluster. S-adenosyl-L-methionine contacts are provided by residues 177-178 (GE), Ser-209, 232-234 (SLH), and Asn-308. Cys-351 functions as the S-methylcysteine intermediate in the catalytic mechanism.

It belongs to the radical SAM superfamily. RlmN family. [4Fe-4S] cluster serves as cofactor.

The protein resides in the cytoplasm. The enzyme catalyses adenosine(2503) in 23S rRNA + 2 reduced [2Fe-2S]-[ferredoxin] + 2 S-adenosyl-L-methionine = 2-methyladenosine(2503) in 23S rRNA + 5'-deoxyadenosine + L-methionine + 2 oxidized [2Fe-2S]-[ferredoxin] + S-adenosyl-L-homocysteine. It carries out the reaction adenosine(37) in tRNA + 2 reduced [2Fe-2S]-[ferredoxin] + 2 S-adenosyl-L-methionine = 2-methyladenosine(37) in tRNA + 5'-deoxyadenosine + L-methionine + 2 oxidized [2Fe-2S]-[ferredoxin] + S-adenosyl-L-homocysteine. In terms of biological role, specifically methylates position 2 of adenine 2503 in 23S rRNA and position 2 of adenine 37 in tRNAs. Confers resistance to some classes of antibiotics. This chain is Probable dual-specificity RNA methyltransferase RlmN, found in Staphylococcus aureus (strain bovine RF122 / ET3-1).